The chain runs to 393 residues: Histidinol dehydrogenase (393 aa).

NAD(+)-binding residues include Tyr-112, Gln-171, and Asn-194. Substrate contacts are provided by Thr-217, Gln-239, and His-242. Zn(2+) is bound by residues Gln-239 and His-242. Active-site proton acceptor residues include Glu-293 and His-294. Substrate is bound by residues His-294, Asp-326, Glu-379, and His-384. Zn(2+) is bound at residue Asp-326. His-384 provides a ligand contact to Zn(2+).

The protein belongs to the histidinol dehydrogenase family. It depends on Zn(2+) as a cofactor.

The enzyme catalyses L-histidinol + 2 NAD(+) + H2O = L-histidine + 2 NADH + 3 H(+). It participates in amino-acid biosynthesis; L-histidine biosynthesis; L-histidine from 5-phospho-alpha-D-ribose 1-diphosphate: step 9/9. Catalyzes the sequential NAD-dependent oxidations of L-histidinol to L-histidinaldehyde and then to L-histidine. The polypeptide is Histidinol dehydrogenase (Sulfolobus acidocaldarius (strain ATCC 33909 / DSM 639 / JCM 8929 / NBRC 15157 / NCIMB 11770)).